Here is a 363-residue protein sequence, read N- to C-terminus: Spermidine/putrescine import ATP-binding protein PotA (363 aa).

Residues 6–236 (VEFKNVIKKY…PINHFVADFI (231 aa)) enclose the ABC transporter domain. Position 38-45 (38-45 (GPSGCGKT)) interacts with ATP.

It belongs to the ABC transporter superfamily. Spermidine/putrescine importer (TC 3.A.1.11.1) family. In terms of assembly, the complex is composed of two ATP-binding proteins (PotA), two transmembrane proteins (PotB and PotC) and a solute-binding protein (PotD).

Its subcellular location is the cell membrane. The enzyme catalyses ATP + H2O + polyamine-[polyamine-binding protein]Side 1 = ADP + phosphate + polyamineSide 2 + [polyamine-binding protein]Side 1.. In terms of biological role, part of the ABC transporter complex PotABCD involved in spermidine/putrescine import. Responsible for energy coupling to the transport system. The protein is Spermidine/putrescine import ATP-binding protein PotA of Latilactobacillus sakei subsp. sakei (strain 23K) (Lactobacillus sakei subsp. sakei).